An 80-amino-acid chain; its full sequence is HssA/B-like protein 2 (80 aa).

Residues 1–29 (MSLLSALTSISKPMNTSSKSSVSSKNVSG) form a disordered region. Over residues 9-29 (SISKPMNTSSKSSVSSKNVSG) the composition is skewed to low complexity.

This sequence belongs to the hssA/B family.

In Dictyostelium discoideum (Social amoeba), this protein is HssA/B-like protein 2 (hssl2).